A 108-amino-acid polypeptide reads, in one-letter code: Ribonuclease P protein component 4 (108 aa).

Residues Cys-67, Cys-70, Cys-93, and Cys-96 each contribute to the Zn(2+) site.

It belongs to the eukaryotic/archaeal RNase P protein component 4 family. As to quaternary structure, consists of a catalytic RNA component and at least 4-5 protein subunits. The cofactor is Zn(2+).

The protein resides in the cytoplasm. The enzyme catalyses Endonucleolytic cleavage of RNA, removing 5'-extranucleotides from tRNA precursor.. Its function is as follows. Part of ribonuclease P, a protein complex that generates mature tRNA molecules by cleaving their 5'-ends. The sequence is that of Ribonuclease P protein component 4 from Methanococcoides burtonii (strain DSM 6242 / NBRC 107633 / OCM 468 / ACE-M).